The chain runs to 362 residues: S-adenosylmethionine-dependent nucleotide dehydratase RSAD2 (362 aa).

Positions 47 to 73 (EQPQVRGEPEDTQETQEDGNSTQPTTP) are disordered. The span at 64–73 (DGNSTQPTTP) shows a compositional bias: polar residues. The Radical SAM core domain occupies 70–290 (PTTPVSVNYH…LERHKEVSCL (221 aa)). [4Fe-4S] cluster-binding residues include C84, C88, and C91. At K198 the chain carries N6-acetyllysine. Residue K207 forms a Glycyl lysine isopeptide (Lys-Gly) (interchain with G-Cter in ubiquitin) linkage.

Belongs to the radical SAM superfamily. RSAD2 family. In terms of assembly, homodimer. Interacts with IRAK1 and TRAF6. Interacts with FPPS. Interacts with HADHB. Interacts (via C-terminus) with VAPA/VAP33 (via C-terminus). It depends on [4Fe-4S] cluster as a cofactor. In terms of processing, acetylated by HAT1. HAT1-mediated acetylation of Lys-198 in turn recruits UBE4A that stimulates RSAD2 polyubiquitination leading to proteasomal degradation. Post-translationally, 'Lys-6'-linked polyubiquitination at Lys-207 leads to RSAD2 protein degradation. In terms of tissue distribution, expressed at higher levels in atherosclerotic arteries than in normal arteries.

Its subcellular location is the endoplasmic reticulum membrane. It localises to the golgi apparatus. It is found in the endoplasmic reticulum. The protein resides in the lipid droplet. The protein localises to the mitochondrion. Its subcellular location is the mitochondrion inner membrane. It localises to the mitochondrion outer membrane. It catalyses the reaction CTP + AH2 + S-adenosyl-L-methionine = 3'-deoxy-3',4'-didehydro-CTP + 5'-deoxyadenosine + L-methionine + A + H2O + H(+). With respect to regulation, IRAK1 and TRAF6 synergistically activate RSAD2 increasing its activity with CTP as substrate about 10-fold. Its function is as follows. Interferon-inducible antiviral protein which plays a major role in the cell antiviral state induced by type I and type II interferon. Catalyzes the conversion of cytidine triphosphate (CTP) to 3'-deoxy-3',4'-didehydro-CTP (ddhCTP) via a SAM-dependent radical mechanism. In turn, ddhCTP acts as a chain terminator for the RNA-dependent RNA polymerases from multiple viruses and directly inhibits viral replication. Therefore, inhibits a wide range of DNA and RNA viruses. Also promotes TLR7 and TLR9-dependent production of IFN-beta production in plasmacytoid dendritic cells (pDCs) by facilitating 'Lys-63'-linked ubiquitination of IRAK1 by TRAF6. Plays a role in CD4+ T-cells activation and differentiation. Facilitates T-cell receptor (TCR)-mediated GATA3 activation and optimal T-helper 2 (Th2) cytokine production by modulating NFKB1 and JUNB activities. Can inhibit secretion of soluble proteins. In Mus musculus (Mouse), this protein is S-adenosylmethionine-dependent nucleotide dehydratase RSAD2.